Here is a 451-residue protein sequence, read N- to C-terminus: Phosphoglucosamine mutase (451 aa).

Ser107 acts as the Phosphoserine intermediate in catalysis. Residues Ser107, Asp246, Asp248, and Asp250 each contribute to the Mg(2+) site. Ser107 carries the post-translational modification Phosphoserine.

This sequence belongs to the phosphohexose mutase family. Mg(2+) serves as cofactor. In terms of processing, activated by phosphorylation.

The enzyme catalyses alpha-D-glucosamine 1-phosphate = D-glucosamine 6-phosphate. Its function is as follows. Catalyzes the conversion of glucosamine-6-phosphate to glucosamine-1-phosphate. The protein is Phosphoglucosamine mutase of Azoarcus sp. (strain BH72).